The primary structure comprises 284 residues: Probable plastid-lipid-associated protein 10, chloroplastic (284 aa).

The transit peptide at 1 to 40 directs the protein to the chloroplast; sequence MDRIASATFSCPAISLSRVCRISPFGLNIKTNHRKRFSCR.

Belongs to the PAP/fibrillin family.

It is found in the plastid. The protein localises to the chloroplast. It localises to the plastoglobule. The chain is Probable plastid-lipid-associated protein 10, chloroplastic (PAP10) from Arabidopsis thaliana (Mouse-ear cress).